A 444-amino-acid polypeptide reads, in one-letter code: MKERSTELVDGFRHSVPYINAHRGKTFVIMLGGEAIAHENFPSIINDIGLLHSLGIRLVVVYGARPQIDVALEEQKISPLYHKHTRITDSKTLEVVKQSAGTLQLDITARLSMSLSNTPLQGAHINVVSGNFVIAQPLGVDDGVDYCHSGKIRRIDEEAIHRQLDNHAIVLIGPVAVSVTGESFNLTSEEVATQLAIKLKAQKLIGFCSSQGVVDASGQIVSELLPNQAEERIQALQTTGDYHSGTVRFLRGAVTACRRGVERSHLLSYQADGAIVQELFSRDGIGTQIVMESAEKVRRANINDIGGILELIRPLEQQGILVRRSREQLEMEIDQFTIIERDNLTIACAALYPYQSEKIGEMACVAVHPDYRSSCRGEVLLQRISTQAKQMGLDKLFVLTTRSIHWFQEKGFTPAEIDKLPIEKQALYNYQRRSKILILDLHKE.

The N-acetyltransferase domain maps to 295-434 (EKVRRANIND…QALYNYQRRS (140 aa)).

The protein belongs to the acetyltransferase family. ArgA subfamily. In terms of assembly, homohexamer.

Its subcellular location is the cytoplasm. The catalysed reaction is L-glutamate + acetyl-CoA = N-acetyl-L-glutamate + CoA + H(+). It participates in amino-acid biosynthesis; L-arginine biosynthesis; N(2)-acetyl-L-ornithine from L-glutamate: step 1/4. The chain is Amino-acid acetyltransferase from Proteus mirabilis (strain HI4320).